The sequence spans 212 residues: NAD(P)H-hydrate epimerase (212 aa).

Residues 10–212 form the YjeF N-terminal domain; sequence MRSLERAAIA…IGVIVKPIGL (203 aa). 65 to 69 contributes to the (6S)-NADPHX binding site; sequence NNGGD. K(+)-binding residues include Asn-66 and Asp-129. (6S)-NADPHX-binding positions include 133–139 and Asp-161; that span reads GLGLTRP. A K(+)-binding site is contributed by Ser-164.

This sequence belongs to the NnrE/AIBP family. K(+) is required as a cofactor.

It carries out the reaction (6R)-NADHX = (6S)-NADHX. The catalysed reaction is (6R)-NADPHX = (6S)-NADPHX. In terms of biological role, catalyzes the epimerization of the S- and R-forms of NAD(P)HX, a damaged form of NAD(P)H that is a result of enzymatic or heat-dependent hydration. This is a prerequisite for the S-specific NAD(P)H-hydrate dehydratase to allow the repair of both epimers of NAD(P)HX. The chain is NAD(P)H-hydrate epimerase from Rhodobacter capsulatus (strain ATCC BAA-309 / NBRC 16581 / SB1003).